The primary structure comprises 300 residues: Homoserine kinase (300 aa).

Residue 82–92 coordinates ATP; that stretch reads RPGSGLGSSAA.

It belongs to the GHMP kinase family. Homoserine kinase subfamily.

It is found in the cytoplasm. It carries out the reaction L-homoserine + ATP = O-phospho-L-homoserine + ADP + H(+). It participates in amino-acid biosynthesis; L-threonine biosynthesis; L-threonine from L-aspartate: step 4/5. Its function is as follows. Catalyzes the ATP-dependent phosphorylation of L-homoserine to L-homoserine phosphate. The sequence is that of Homoserine kinase from Methanocella arvoryzae (strain DSM 22066 / NBRC 105507 / MRE50).